The primary structure comprises 233 residues: ATP-dependent dethiobiotin synthetase BioD (233 aa).

12-17 (GVGKTI) provides a ligand contact to ATP. A Mg(2+)-binding site is contributed by T16. K37 is a catalytic residue. S41 is a binding site for substrate. Residues D51, 112 to 115 (EGAG), and 202 to 204 (PKL) each bind ATP. 2 residues coordinate Mg(2+): D51 and E112.

Belongs to the dethiobiotin synthetase family. Homodimer. The cofactor is Mg(2+).

The protein localises to the cytoplasm. It catalyses the reaction (7R,8S)-7,8-diammoniononanoate + CO2 + ATP = (4R,5S)-dethiobiotin + ADP + phosphate + 3 H(+). Its pathway is cofactor biosynthesis; biotin biosynthesis; biotin from 7,8-diaminononanoate: step 1/2. In terms of biological role, catalyzes a mechanistically unusual reaction, the ATP-dependent insertion of CO2 between the N7 and N8 nitrogen atoms of 7,8-diaminopelargonic acid (DAPA, also called 7,8-diammoniononanoate) to form a ureido ring. The polypeptide is ATP-dependent dethiobiotin synthetase BioD (Bacillus velezensis (strain DSM 23117 / BGSC 10A6 / LMG 26770 / FZB42) (Bacillus amyloliquefaciens subsp. plantarum)).